The chain runs to 255 residues: MAVGKNKRLSKGKKGQKKRVVDPFTRKEWFDIKAPSTFENRNVGKTLVNKSTGLKSASDALKGRVVEVCLADLQGSEDHSFRKIKLRVDEVQGKNLLTNFHGMDFTTDKLRSMVRKWQTLIEANVTVKTSDDYVLRIFAIAFTRKQANQVKRHSYAQSSHIRAIRKVISEILTKEVQGSTLAQLTSKLIPEVINKEIENATKDIFPLQNIHVRKVKLLKQPKFDVGALMALHGEGSGEEKGKKVTGFKDEVLETV.

Over residues 1–18 (MAVGKNKRLSKGKKGQKK) the composition is skewed to basic residues. The tract at residues 1–20 (MAVGKNKRLSKGKKGQKKRV) is disordered. Residue Ala2 is modified to N-acetylalanine; partial. Thr245 is modified (phosphothreonine). Lys248 is covalently cross-linked (Glycyl lysine isopeptide (Lys-Gly) (interchain with G-Cter in ubiquitin)). Thr254 carries the post-translational modification Phosphothreonine.

The protein belongs to the eukaryotic ribosomal protein eS1 family. As to quaternary structure, component of the small ribosomal subunit. Mature ribosomes consist of a small (40S) and a large (60S) subunit. The 40S subunit contains about 33 different proteins and 1 molecule of RNA (18S). The 60S subunit contains about 49 different proteins and 3 molecules of RNA (25S, 5.8S and 5S).

Its subcellular location is the cytoplasm. This is Small ribosomal subunit protein eS1A from Saccharomyces cerevisiae (strain RM11-1a) (Baker's yeast).